A 214-amino-acid chain; its full sequence is MSKPPPKPVKPGQVKVFRALYTFEPRTPDELYFEEGDIIYITDMSDTNWWKGTSKGRTGLIPSNYVAEQAESIDNPLHEAAKRGNLSWLRECLDNRVGVNGLDKAGSTALYWACHGGHKDIVDMLFTQPNIELNQQNKLGDTALHAAAWKGYADIVQLLLAKGARTDLRNNEKKLALDMATNAACASLLKKKQGTDAVRTLSNAEDYLDDEDSD.

The residue at position 2 (Ser2) is an N-acetylserine. Residues 12 to 71 enclose the SH3 domain; that stretch reads GQVKVFRALYTFEPRTPDELYFEEGDIIYITDMSDTNWWKGTSKGRTGLIPSNYVAEQAE. ANK repeat units follow at residues 72–101, 105–135, and 139–168; these read SIDNPLHEAAKRGNLSWLRECLDNRVGVNG, AGSTALYWACHGGHKDIVDMLFTQPNIELNQ, and LGDTALHAAAWKGYADIVQLLLAKGARTDL. Residue Thr200 is modified to Phosphothreonine. Residues Ser202 and Ser213 each carry the phosphoserine modification.

As to quaternary structure, interacts with SRC and SMN1. Interacts with FASLG.

Its subcellular location is the cytoplasm. Induces bone resorption, acting probably through a signaling cascade which results in the secretion of factor(s) enhancing osteoclast formation and activity. The sequence is that of Osteoclast-stimulating factor 1 (OSTF1) from Sus scrofa (Pig).